Here is a 443-residue protein sequence, read N- to C-terminus: Glutamate-rich protein 1 (443 aa).

At Lys12 the chain carries N6-acetyllysine. Residues 15–333 form a disordered region; sequence QRLFPPVPSG…DASEEDDTIT (319 aa). Over residues 42–54 the composition is skewed to basic and acidic residues; it reads VTSEKVSQKHAEP. A compositionally biased stretch (polar residues) spans 87 to 97; it reads SCGSPENASSG. Composition is skewed to basic residues over residues 109-124 and 159-176; these read PKRRRIRKHKSKKKFK and KNKKRKLKKKQQIKRKKA. Acidic residues predominate over residues 205 to 226; that stretch reads ACEEDGVDTSEEDPTLAGEEDV. Residues Ser238 and Ser254 each carry the phosphoserine modification. The segment covering 250-266 has biased composition (acidic residues); the sequence is GADASEEDPTPAGEEDV. Position 277 is a phosphothreonine (Thr277). The span at 281–296 shows a compositional bias: basic and acidic residues; that stretch reads DLTRAGEEDGKDTREE. Positions 297-332 are enriched in acidic residues; it reads DGADASEEDPTWAGEEEGADSGEEDGADASEEDDTI.

This is Glutamate-rich protein 1 (ERICH1) from Homo sapiens (Human).